The chain runs to 89 residues: Mitochondrial import inner membrane translocase subunit Tim9 (89 aa).

Ala-2 carries the post-translational modification N-acetylalanine. Positions Cys-28–Cys-52 match the Twin CX3C motif motif. Intrachain disulfides connect Cys-28-Cys-52 and Cys-32-Cys-48.

Belongs to the small Tim family. In terms of assembly, heterohexamer; composed of 3 copies of TIMM9 and 3 copies of TIMM10/TIM10A, named soluble 70 kDa complex. The complex forms a 6-bladed alpha-propeller structure and associates with the TIMM22 component of the TIM22 complex. Interacts with multi-pass transmembrane proteins in transit. Also forms a complex composed of TIMM9, TIMM10/TIM10A and FXC1/TIM10B. In terms of tissue distribution, ubiquitous, with highest expression in heart, kidney, liver and skeletal muscle.

The protein resides in the mitochondrion inner membrane. Mitochondrial intermembrane chaperone that participates in the import and insertion of multi-pass transmembrane proteins into the mitochondrial inner membrane. May also be required for the transfer of beta-barrel precursors from the TOM complex to the sorting and assembly machinery (SAM complex) of the outer membrane. Acts as a chaperone-like protein that protects the hydrophobic precursors from aggregation and guide them through the mitochondrial intermembrane space. In Homo sapiens (Human), this protein is Mitochondrial import inner membrane translocase subunit Tim9 (TIMM9).